We begin with the raw amino-acid sequence, 644 residues long: Probable potassium transport system protein Kup (644 aa).

12 consecutive transmembrane segments (helical) span residues 10-30 (GGAT…GDIG), 56-76 (ILSL…AWVI), 106-126 (WWIL…GVIT), 143-163 (PAWK…LFMV), 175-195 (FGPS…TWIV), 212-232 (FFGI…LAVT), 252-272 (AWYF…GALL), 282-302 (PFFM…SGIA), 343-363 (IYLP…ILWF), 371-391 (FAYG…VFFV), 403-423 (AGLF…ANLL), and 425-445 (FVEG…TMST).

Belongs to the HAK/KUP transporter (TC 2.A.72) family.

It localises to the cell inner membrane. The enzyme catalyses K(+)(in) + H(+)(in) = K(+)(out) + H(+)(out). In terms of biological role, transport of potassium into the cell. Likely operates as a K(+):H(+) symporter. The polypeptide is Probable potassium transport system protein Kup (Acidithiobacillus ferrooxidans (strain ATCC 23270 / DSM 14882 / CIP 104768 / NCIMB 8455) (Ferrobacillus ferrooxidans (strain ATCC 23270))).